The following is a 112-amino-acid chain: Large ribosomal subunit protein eL30 (112 aa).

It belongs to the eukaryotic ribosomal protein eL30 family. As to expression, expressed in roots and leaves.

In Triticum aestivum (Wheat), this protein is Large ribosomal subunit protein eL30.